A 137-amino-acid polypeptide reads, in one-letter code: Profilin-3 (137 aa).

The protein belongs to the profilin family. In terms of assembly, interacts with ACTRT3.

It localises to the cytoplasm. It is found in the cytoskeleton. Its subcellular location is the nucleus. Its function is as follows. Binds to actin and affects the structure of the cytoskeleton. Binds to poly-L-proline, phosphatidylinositol 3-phosphate (PtdIns(3)P), phosphatidylinositol 4,5-bisphosphate (PtdIns(4,5)P2) and phosphatidylinositol 4-phosphate (PtdIns(4)P). Slightly reduces actin polymerization. May be involved in spermatogenesis. This is Profilin-3 (PFN3) from Bos taurus (Bovine).